Reading from the N-terminus, the 449-residue chain is Gamma-glutamyl phosphate reductase (449 aa).

This sequence belongs to the gamma-glutamyl phosphate reductase family.

It localises to the cytoplasm. The catalysed reaction is L-glutamate 5-semialdehyde + phosphate + NADP(+) = L-glutamyl 5-phosphate + NADPH + H(+). It functions in the pathway amino-acid biosynthesis; L-proline biosynthesis; L-glutamate 5-semialdehyde from L-glutamate: step 2/2. Its function is as follows. Catalyzes the NADPH-dependent reduction of L-glutamate 5-phosphate into L-glutamate 5-semialdehyde and phosphate. The product spontaneously undergoes cyclization to form 1-pyrroline-5-carboxylate. In Methanococcoides burtonii (strain DSM 6242 / NBRC 107633 / OCM 468 / ACE-M), this protein is Gamma-glutamyl phosphate reductase.